The chain runs to 268 residues: Phosphatidylglycerol--prolipoprotein diacylglyceryl transferase (268 aa).

A run of 7 helical transmembrane segments spans residues 27–47 (PALR…MWLL), 66–86 (LLFY…VLFY), 104–124 (GGMS…YIAW), 130–150 (FFAV…AGRI), 181–201 (PSQL…LYWF), 208–228 (VGAV…IVET), and 242–262 (FMTM…YLIL). Arg149 provides a ligand contact to a 1,2-diacyl-sn-glycero-3-phospho-(1'-sn-glycerol).

Belongs to the Lgt family.

Its subcellular location is the cell inner membrane. The enzyme catalyses L-cysteinyl-[prolipoprotein] + a 1,2-diacyl-sn-glycero-3-phospho-(1'-sn-glycerol) = an S-1,2-diacyl-sn-glyceryl-L-cysteinyl-[prolipoprotein] + sn-glycerol 1-phosphate + H(+). The protein operates within protein modification; lipoprotein biosynthesis (diacylglyceryl transfer). Functionally, catalyzes the transfer of the diacylglyceryl group from phosphatidylglycerol to the sulfhydryl group of the N-terminal cysteine of a prolipoprotein, the first step in the formation of mature lipoproteins. The polypeptide is Phosphatidylglycerol--prolipoprotein diacylglyceryl transferase (Shewanella sp. (strain MR-4)).